The primary structure comprises 293 residues: uncharacterized protein (293 aa).

Over residues 1–10 (MHMQLRKRKR) the composition is skewed to basic residues. A disordered region spans residues 1–28 (MHMQLRKRKRVDYSGRNQTSDPPSTTTA). Residues 15–28 (GRNQTSDPPSTTTA) are compositionally biased toward polar residues.

Its subcellular location is the nucleus. This is an uncharacterized protein from Saccharomyces cerevisiae (strain ATCC 204508 / S288c) (Baker's yeast).